We begin with the raw amino-acid sequence, 691 residues long: Threonine--tRNA ligase (691 aa).

A TGS domain is found at methionine 1–threonine 66. A catalytic region spans residues aspartate 265–proline 571. Zn(2+) is bound by residues cysteine 370, histidine 421, and histidine 548.

It belongs to the class-II aminoacyl-tRNA synthetase family. In terms of assembly, homodimer. It depends on Zn(2+) as a cofactor.

It localises to the cytoplasm. It catalyses the reaction tRNA(Thr) + L-threonine + ATP = L-threonyl-tRNA(Thr) + AMP + diphosphate + H(+). Catalyzes the attachment of threonine to tRNA(Thr) in a two-step reaction: L-threonine is first activated by ATP to form Thr-AMP and then transferred to the acceptor end of tRNA(Thr). Also edits incorrectly charged L-seryl-tRNA(Thr). The chain is Threonine--tRNA ligase from Mycolicibacterium vanbaalenii (strain DSM 7251 / JCM 13017 / BCRC 16820 / KCTC 9966 / NRRL B-24157 / PYR-1) (Mycobacterium vanbaalenii).